Reading from the N-terminus, the 823-residue chain is Fibroblast growth factor receptor 2 (823 aa).

The N-terminal stretch at 1-23 (MVSWDSGCLICLVVVTMAGLSLA) is a signal peptide. Residues 24–379 (RPSFNLVVED…EFPTSPDYLE (356 aa)) are Extracellular-facing. The Ig-like C2-type 1 domain maps to 27-128 (FNLVVEDATL…DTLYFIVNVT (102 aa)). Residues Cys65 and Cys110 are joined by a disulfide bond. Asn86, Asn126, and Asn148 each carry an N-linked (GlcNAc...) asparagine glycan. 2 consecutive Ig-like C2-type domains span residues 156–249 (PYWT…YHLD) and 258–360 (PILQ…AWLT). A heparin-binding region spans residues 163–180 (KMEKRLHAVPAANTVKFR). Cys181 and Cys233 are joined by a disulfide. Asn230, Asn243, Asn267, Asn299, Asn320, and Asn333 each carry an N-linked (GlcNAc...) asparagine glycan. Cysteines 280 and 344 form a disulfide. The helical transmembrane segment at 380–400 (IAIYCIGVFLIACMVLTVILC) threads the bilayer. At 401 to 823 (RMKNTTKKPD…YQHMNGSVKT (423 aa)) the chain is on the cytoplasmic side. Tyr468 bears the Phosphotyrosine; by autocatalysis mark. The region spanning 483 to 772 (LTLGKPLGEG…LTLTTNEEYL (290 aa)) is the Protein kinase domain. Residues 489–497 (LGEGCFGQV), Lys519, 567–569 (EYA), and Asn573 contribute to the ATP site. Residue Tyr588 is modified to Phosphotyrosine; by autocatalysis. Asp628 (proton acceptor) is an active-site residue. A phosphotyrosine; by autocatalysis mark is found at Tyr658, Tyr659, and Tyr771.

This sequence belongs to the protein kinase superfamily. Tyr protein kinase family. Fibroblast growth factor receptor subfamily. As to quaternary structure, monomer. Homodimer after ligand binding. Autophosphorylated. Binding of FGF family members together with heparan sulfate proteoglycan or heparin promotes receptor dimerization and autophosphorylation on tyrosine residues. Autophosphorylation occurs in trans between the two FGFR molecules present in the dimer. Post-translationally, N-glycosylated in the endoplasmic reticulum. The N-glycan chains undergo further maturation to an Endo H-resistant form in the Golgi apparatus. In terms of processing, ubiquitinated. FGFR2 is rapidly ubiquitinated after autophosphorylation, leading to internalization and degradation. Subject to degradation both in lysosomes and by the proteasome.

Its subcellular location is the cell membrane. It is found in the golgi apparatus. It localises to the cytoplasmic vesicle. The catalysed reaction is L-tyrosyl-[protein] + ATP = O-phospho-L-tyrosyl-[protein] + ADP + H(+). Present in an inactive conformation in the absence of bound ligand. Ligand binding leads to dimerization and activation by autophosphorylation on tyrosine residues. In terms of biological role, tyrosine-protein kinase that acts as a cell-surface receptor for fibroblast growth factors and plays an essential role in the regulation of cell proliferation, differentiation, migration and apoptosis, and in the regulation of embryonic development. Required for normal embryonic patterning, limb bud development, lung morphogenesis, osteogenesis and skin development. Plays an essential role in the regulation of osteoblast differentiation, proliferation and apoptosis, and is required for normal skeleton development. Promotes cell proliferation in keratinocytes and immature osteoblasts, but promotes apoptosis in differentiated osteoblasts. Phosphorylates PLCG1, FRS2 and PAK4. Ligand binding leads to the activation of several signaling cascades. Activation of PLCG1 leads to the production of the cellular signaling molecules diacylglycerol and inositol 1,4,5-trisphosphate. Phosphorylation of FRS2 triggers recruitment of GRB2, GAB1, PIK3R1 and SOS1, and mediates activation of RAS, MAPK1/ERK2, MAPK3/ERK1 and the MAP kinase signaling pathway, as well as of the AKT1 signaling pathway. FGFR2 signaling is down-regulated by ubiquitination, internalization and degradation. Mutations that lead to constitutive kinase activation or impair normal FGFR2 maturation, internalization and degradation lead to aberrant signaling. Over-expressed FGFR2 promotes activation of STAT1. The polypeptide is Fibroblast growth factor receptor 2 (FGFR2) (Gallus gallus (Chicken)).